Reading from the N-terminus, the 382-residue chain is MSTYTRPVMLLLCGLLLLTLAIAVLNTLVPLWLAQANLPTWQVGMVSSSYFTGNLVGTLFTGYLIKRIGFNRSYYLASLIFAAGCVGLGVMVGFWSWMSWRFIAGIGCAMIWVVVESALMCSGTSHNRGRLLAAYMMVYYMGTFLGQLLVSKVSGELLHVLPWVTGMILAGILPLLFTRIVNQQTQTRHSSSISAMLKLRQARLGVNGCIISGIVLGSLYGLMPLYLKHQGMANASIGFWMAVLVSAGILGQWPMGRLADKFGRLLVLRVQVFVVILGSIAMLTQAAMAPALFILGAAGFTLYPVAMAWACEKVEHHQLVAMNQALLLSYTVGSLLGPSFAAMLMQNYSDNLLFIMIASVSFIYLLMLLRNAGQTPNPVAHI.

The next 12 membrane-spanning stretches (helical) occupy residues 8-28, 45-65, 75-95, 102-122, 131-151, 157-177, 204-224, 231-251, 270-290, 291-311, 325-345, and 349-369; these read VMLL…LNTL, MVSS…GYLI, YLAS…VGFW, FIAG…LMCS, LLAA…LLVS, LLHV…PLLF, LGVN…GLMP, GMAN…GILG, VQVF…AMAP, ALFI…AWAC, ALLL…AMLM, and SDNL…LMLL.

This sequence belongs to the major facilitator superfamily. YcaD (TC 2.A.1.26) family.

Its subcellular location is the cell inner membrane. This is an uncharacterized protein from Salmonella agona (strain SL483).